The following is a 379-amino-acid chain: Ribosomal RNA large subunit methyltransferase G (379 aa).

The protein belongs to the methyltransferase superfamily. RlmG family.

It is found in the cytoplasm. The enzyme catalyses guanosine(1835) in 23S rRNA + S-adenosyl-L-methionine = N(2)-methylguanosine(1835) in 23S rRNA + S-adenosyl-L-homocysteine + H(+). Its function is as follows. Specifically methylates the guanine in position 1835 (m2G1835) of 23S rRNA. This chain is Ribosomal RNA large subunit methyltransferase G, found in Pectobacterium atrosepticum (strain SCRI 1043 / ATCC BAA-672) (Erwinia carotovora subsp. atroseptica).